The sequence spans 593 residues: Arginine--tRNA ligase (593 aa).

The 'HIGH' region motif lies at 138-148 (ANPTGPLHVGH).

This sequence belongs to the class-I aminoacyl-tRNA synthetase family. Monomer.

It localises to the cytoplasm. It catalyses the reaction tRNA(Arg) + L-arginine + ATP = L-arginyl-tRNA(Arg) + AMP + diphosphate. This chain is Arginine--tRNA ligase, found in Burkholderia orbicola (strain MC0-3).